The sequence spans 633 residues: Extracellular metalloproteinase 3 (633 aa).

A signal peptide spans 1–18; it reads MHGLLLAGLLALPMNVLA. Positions 19 to 246 are excised as a propeptide; sequence HPAEQQTSSV…VHNVVDYVAS (228 aa). Residue Asn-410 is glycosylated (N-linked (GlcNAc...) asparagine). Zn(2+) is bound at residue His-429. The active site involves Glu-430. Zn(2+) is bound at residue His-433. The N-linked (GlcNAc...) asparagine glycan is linked to Asn-480.

This sequence belongs to the peptidase M36 family. Zn(2+) serves as cofactor.

The protein resides in the secreted. Its function is as follows. Secreted metalloproteinase probably acting as a virulence factor. The sequence is that of Extracellular metalloproteinase 3 (MEP3) from Arthroderma otae (Microsporum canis).